The primary structure comprises 1591 residues: Rho guanine nucleotide exchange factor TIAM1 (1591 aa).

Residues 1–78 are disordered; that stretch reads MGNAESQHVE…AENGLEPFSQ (78 aa). Gly-2 is lipidated: N-myristoyl glycine. Residues 7-19 are compositionally biased toward basic and acidic residues; it reads QHVEHEFYGEKHA. Positions 20 to 49 are enriched in basic residues; that stretch reads SLGRKHTSRSLRLSHKTRRTRHASSGKVIH. A compositionally biased stretch (low complexity) spans 53 to 67; the sequence is EVSTRSSSTPSIPQS. Phosphoserine is present on Ser-231. Disordered regions lie at residues 298–379 and 393–422; these read SEGA…GDAA and MSTT…SPGQ. Composition is skewed to polar residues over residues 300–313 and 340–361; these read GATN…NSMQ and TTDT…SPTT. A phosphoserine mark is found at Ser-356 and Ser-358. The segment covering 367–377 has biased composition (low complexity); that stretch reads GSDSGSSSTGD. The segment covering 412–422 has biased composition (polar residues); sequence QSSGTLSSPGQ. In terms of domain architecture, PH 1 spans 434–549; the sequence is VRKAGALAVK…TAIHSACATA (116 aa). The residue at position 695 (Ser-695) is a Phosphoserine. In terms of domain architecture, RBD spans 765–832; sequence TPSWFCLPNN…QPEEDIYELL (68 aa). Tyr-829 carries the post-translational modification Phosphotyrosine; by NTRK2. Residues 845-908 form the PDZ domain; sequence SIHIEKSDTA…NNRAADALNS (64 aa). Positions 939 to 1034 are disordered; the sequence is SPPHRVDGPA…TGPQLATMRQ (96 aa). The segment covering 958-975 has biased composition (polar residues); it reads LTSNPGHSLCSEQGSSAE. Acidic residues predominate over residues 977–990; that stretch reads APEETEGPDLESSD. Low complexity predominate over residues 1014–1024; that stretch reads PSDQSPSPQDS. A compositionally biased stretch (polar residues) spans 1025 to 1034; the sequence is TGPQLATMRQ. Residues 1040–1234 form the DH domain; sequence KLRKVICELL…NKVASHINEM (195 aa). The region spanning 1261 to 1397 is the PH 2 domain; it reads DLSMGDLLLH…KAVHSILRDK (137 aa). Tyr-1323 carries the post-translational modification Phosphotyrosine. Residues Lys-1404 and Lys-1420 each participate in a glycyl lysine isopeptide (Lys-Gly) (interchain with G-Cter in ubiquitin) cross-link. A disordered region spans residues 1456 to 1482; that stretch reads TIDSDAVSASSPEKESQQPPGGGDTDR. Residue Ser-1519 is modified to Phosphoserine.

The protein belongs to the TIAM family. As to quaternary structure, component of the Par polarity complex, composed of at least phosphorylated PRKCZ, PARD3 and TIAM1. Interacts with NTRK2; mediates the activation of RAC1 by BDNF. Interacts with MAPK8IP2 and CD44. Interacts with BAIAP2. Interacts with EPHA8; regulates clathrin-mediated endocytosis of EPHA8. Interacts with PARD3. Interacts (via PDZ domain) with CNTNAP4, SDC1 and SDC3 (via C-terminus). Post-translationally, ubiquitinated. Undergoes 'Lys-48' ubiquitination at Lys-1404 and Lys-1420 by a CUL3(KBTBD6/7) E3 ubiquitin ligase complex composed of CUL3, RBX1, KBTBD6 and KBTBD7. 'Lys-48' ubiquitination at Lys-1404 and Lys-1420 triggers proteasomal degradation. Ubiquitination at Lys-1404 and Lys-1420 by CUL3(KBTBD6/7) also requires the membrane-associated protein GABARAP and may therefore be spatially restricted within the cell. In terms of tissue distribution, found in virtually all analyzed tumor cell lines including B- and T-lymphomas, neuroblastomas, melanomas and carcinomas.

It is found in the cell junction. The protein localises to the cell membrane. In terms of biological role, guanyl-nucleotide exchange factor that activates RHO-like proteins and connects extracellular signals to cytoskeletal activities. Activates RAC1, CDC42, and to a lesser extent RHOA and their downstream signaling to regulate processes like cell adhesion and cell migration. The sequence is that of Rho guanine nucleotide exchange factor TIAM1 from Homo sapiens (Human).